Reading from the N-terminus, the 228-residue chain is Chromatin remodeling protein SHL (228 aa).

In terms of domain architecture, BAH spans 21–137; the sequence is KSIQEGDAVL…STTGAFDPDR (117 aa). The PHD-type zinc-finger motif lies at 139-190; it reads TVFCKCEMPYNPDDLMVQCEECSEWFHPSCIGTTIEEAKKPDNFYCEECSPQ. Positions 191 to 203 are enriched in polar residues; the sequence is QQNLHNSNSTSNN. The segment at 191-228 is disordered; it reads QQNLHNSNSTSNNRDAKVNGKRSLEVTKSKNKHTKRPG. A compositionally biased stretch (basic and acidic residues) spans 204–218; sequence RDAKVNGKRSLEVTK. Positions 210-217 match the Nuclear localization signal motif; sequence GKRSLEVT. A compositionally biased stretch (basic residues) spans 219–228; that stretch reads SKNKHTKRPG.

It belongs to the SHL1/EBS protein family. As to quaternary structure, recognizes di- and trimethylated histone H3 at lysine 4. Interacts with HDA6. Interacts with DEK3. In terms of tissue distribution, expressed ubiquitously. Mostly expressed in roots, stems, leaves and flowers, and, to a lower extent, in siliques.

The protein resides in the nucleus. Functionally, chromatin remodeling factor that binds to methylated histone (e.g. H3K4me2/3) to prevent their acetylation (e.g. H3K9K14Ac), likely by recruiting histone deacetylase (HDAC) complexes, and thus regulate the transcription of target genes. Required during development and for fertility, probably by modulating developmental gene expression. Promotes development speed, but at fitness cost. Involved in the chromatin-mediated repression of floral initiation and controls genes regulating flowering. Negatively regulates the expression of the floral integrator SOC1, by preventing high levels of H3 acetylation, thus maintaining an inactive chromatin conformation. The protein is Chromatin remodeling protein SHL of Arabidopsis thaliana (Mouse-ear cress).